We begin with the raw amino-acid sequence, 421 residues long: Histidine--tRNA ligase (421 aa).

It belongs to the class-II aminoacyl-tRNA synthetase family. Homodimer.

It localises to the cytoplasm. The catalysed reaction is tRNA(His) + L-histidine + ATP = L-histidyl-tRNA(His) + AMP + diphosphate + H(+). The protein is Histidine--tRNA ligase of Thermus thermophilus (strain ATCC BAA-163 / DSM 7039 / HB27).